Here is a 326-residue protein sequence, read N- to C-terminus: Serine hydrolase-like protein (326 aa).

An AB hydrolase-1 domain is found at 44-155 (PVLCLHGWAD…FLPTEVTDMF (112 aa)). S118 is an active-site residue.

The protein belongs to the AB hydrolase superfamily.

In terms of biological role, probable serine hydrolase. In Danio rerio (Zebrafish), this protein is Serine hydrolase-like protein (serhl).